The sequence spans 169 residues: MHVETLVIEPLTKEAFAPFGDVIETEGAELRLINNGTTERYHDLARVEAAGTEARVLVNIFRGQSFEAPIDIVMMERHPFGSQAFIPLNGRPFLVVVAEDDGGKPARLRVFLAHGNQGVNYLRNVWHHPLLALEQKSDFLIVDRAGKEDNLEEFFFSDTTYRIETTKPA.

The protein belongs to the ureidoglycolate lyase family. As to quaternary structure, homodimer. Ni(2+) is required as a cofactor.

It catalyses the reaction (S)-ureidoglycolate = urea + glyoxylate. The protein operates within nitrogen metabolism; (S)-allantoin degradation. Catalyzes the catabolism of the allantoin degradation intermediate (S)-ureidoglycolate, generating urea and glyoxylate. Involved in the utilization of allantoin as nitrogen source. This is Ureidoglycolate lyase from Brucella anthropi (strain ATCC 49188 / DSM 6882 / CCUG 24695 / JCM 21032 / LMG 3331 / NBRC 15819 / NCTC 12168 / Alc 37) (Ochrobactrum anthropi).